A 471-amino-acid chain; its full sequence is Argininosuccinate lyase (471 aa).

The protein belongs to the lyase 1 family. Argininosuccinate lyase subfamily.

It is found in the cytoplasm. The enzyme catalyses 2-(N(omega)-L-arginino)succinate = fumarate + L-arginine. It functions in the pathway amino-acid biosynthesis; L-arginine biosynthesis; L-arginine from L-ornithine and carbamoyl phosphate: step 3/3. In Ehrlichia canis (strain Jake), this protein is Argininosuccinate lyase.